A 366-amino-acid polypeptide reads, in one-letter code: Aldo-keto reductase AFTS1 (366 aa).

Residue Asp75 coordinates NADP(+). The active-site Proton donor is Tyr80. Substrate is bound at residue His172. NADP(+) contacts are provided by residues 202–203 (SS), Gln228, 257–267 (GSLASGRLARP), and 329–337 (SSVERIDEA).

This sequence belongs to the aldo/keto reductase family.

Its pathway is mycotoxin biosynthesis. Functionally, aldo-keto reductase; part of the gene clusters that mediate the biosynthesis of the host-selective toxins (HSTs) AF-toxins responsible for Alternaria black spot of strawberry disease by the strawberry pathotype. AF-toxin I and III are valine derivatives of 2,3-dyhydroxy-isovaleric acid and 2-hydroxy-isovaleric acid respectively, while AF II is an isoleucine derivative of 2-hydroxy-valeric acid. These derivatives are bound to a 9,10-epoxy-8-hydroxy-9-methyl-decatrienoic acid (EDA) moiety. On cellular level, AF-toxins affect plasma membrane of susceptible cells and cause a sudden increase in loss of K(+) after a few minutes of toxin treatment. The aldo-keto reductase AFTS1 catalyzes the conversion of 2-keto-isovaleric acid (2-KIV) to 2-hydroxy-isovaleric acid (2-HIV) by reduction of its ketone to an alcohol. The acyl-CoA ligase AFT1, the hydrolase AFT2 and the enoyl-CoA hydratases AFT3 and AFT6, but also the polyketide synthase AFT9, the acyl-CoA dehydrogenase AFT10, the cytochrome P450 monooxygenase AFT11 and the oxidoreductase AFT12 are all involved in the biosynthesis of the AK-, AF- and ACT-toxin common EDA structural moiety. The exact function of each enzyme, and of additional enzymes identified within the AF-toxin clusters have still to be determined. This Alternaria alternata (Alternaria rot fungus) protein is Aldo-keto reductase AFTS1.